The chain runs to 1217 residues: DNA-directed RNA polymerase subunit beta' (1217 aa).

The Zn(2+) site is built by Cys-60, Cys-62, Cys-75, and Cys-78. Mg(2+) contacts are provided by Asp-449, Asp-451, and Asp-453. Cys-818, Cys-892, Cys-899, and Cys-902 together coordinate Zn(2+).

It belongs to the RNA polymerase beta' chain family. In terms of assembly, the RNAP catalytic core consists of 2 alpha, 1 beta, 1 beta' and 1 omega subunit. When a sigma factor is associated with the core the holoenzyme is formed, which can initiate transcription. Mg(2+) is required as a cofactor. Zn(2+) serves as cofactor.

It catalyses the reaction RNA(n) + a ribonucleoside 5'-triphosphate = RNA(n+1) + diphosphate. DNA-dependent RNA polymerase catalyzes the transcription of DNA into RNA using the four ribonucleoside triphosphates as substrates. The sequence is that of DNA-directed RNA polymerase subunit beta' from Enterococcus faecalis (strain ATCC 700802 / V583).